Consider the following 286-residue polypeptide: Structural protein p32K (286 aa).

A propeptide spans 1–12 (MYVTNNTALAGG) (removed in mature form). Residues 1–41 (MYVTNNTALAGGAYRKRKKKFQRPKPRKRARKSKKPPKSEN) are disordered. Residues 14-36 (YRKRKKKFQRPKPRKRARKSKKP) show a composition bias toward basic residues.

The protein belongs to the atadenoviridae p32K protein family.

The protein localises to the virion. The polypeptide is Structural protein p32K (Ovine adenovirus D serotype 7 (isolate OAV287) (OAdV-7)).